The chain runs to 761 residues: Ribonucleoside-diphosphate reductase 1 subunit alpha (761 aa).

Positions leucine 5–glycine 95 constitute an ATP-cone domain. Residues lysine 9, glutamate 15–lysine 21, threonine 55, and lysine 91 contribute to the ATP site. Threonine 209 contributes to the GDP binding site. An intrachain disulfide couples cysteine 225 to cysteine 462. DTTP is bound by residues aspartate 232–leucine 234, arginine 262, and arginine 269. N6-acetyllysine is present on lysine 283. Asparagine 437 contributes to the GDP binding site. Asparagine 437 functions as the Proton acceptor in the catalytic mechanism. The Cysteine radical intermediate role is filled by cysteine 439. GDP-binding positions include glutamate 441 and glutamate 623–serine 625. Residue glutamate 441 is the Proton acceptor of the active site.

It belongs to the ribonucleoside diphosphate reductase large chain family. As to quaternary structure, tetramer of two alpha (R1) and two beta (R2) subunits. The B1 protein is a dimer of alpha subunits. A radical transfer pathway occurs between 'Tyr-122' of R2 and R1. In terms of processing, binding of the substrate occurs primarily when the active-site cysteines are reduced.

It catalyses the reaction a 2'-deoxyribonucleoside 5'-diphosphate + [thioredoxin]-disulfide + H2O = a ribonucleoside 5'-diphosphate + [thioredoxin]-dithiol. Under complex allosteric control mediated by deoxynucleoside triphosphates and ATP binding to separate specificity and activation sites on the alpha subunit. The type of nucleotide bound at the specificity site determines substrate preference. It seems probable that ATP makes the enzyme reduce CDP and UDP, dGTP favors ADP reduction and dTTP favors GDP reduction. Stimulated by ATP and inhibited by dATP binding to the activity site. In vitro, its activity is increased by dithiothreitol (DTT) or thioredoxins (non-specific). Inhibited by hydroxyurea, leads to dNTP depletion, replication fork arrest and genomic instability. Provides the precursors necessary for DNA synthesis. Catalyzes the biosynthesis of deoxyribonucleotides from the corresponding ribonucleotides. R1 contains the binding sites for both substrates and allosteric effectors and carries out the actual reduction of the ribonucleotide. It also provides redox-active cysteines. This Escherichia coli (strain K12) protein is Ribonucleoside-diphosphate reductase 1 subunit alpha (nrdA).